The primary structure comprises 238 residues: N-(5'-phosphoribosyl)anthranilate isomerase (238 aa).

This sequence belongs to the TrpF family.

It catalyses the reaction N-(5-phospho-beta-D-ribosyl)anthranilate = 1-(2-carboxyphenylamino)-1-deoxy-D-ribulose 5-phosphate. It functions in the pathway amino-acid biosynthesis; L-tryptophan biosynthesis; L-tryptophan from chorismate: step 3/5. The sequence is that of N-(5'-phosphoribosyl)anthranilate isomerase from Methanosarcina acetivorans (strain ATCC 35395 / DSM 2834 / JCM 12185 / C2A).